Here is a 347-residue protein sequence, read N- to C-terminus: tRNA pseudouridine synthase D (347 aa).

Catalysis depends on D81, which acts as the Nucleophile. Positions 158 to 304 (GVPNYFGNQR…MRHDRRAIAL (147 aa)) constitute a TRUD domain.

The protein belongs to the pseudouridine synthase TruD family.

The enzyme catalyses uridine(13) in tRNA = pseudouridine(13) in tRNA. Functionally, responsible for synthesis of pseudouridine from uracil-13 in transfer RNAs. The protein is tRNA pseudouridine synthase D of Vibrio vulnificus (strain CMCP6).